Reading from the N-terminus, the 1649-residue chain is DNA-directed RNA polymerase subunit beta' (1649 aa).

Cysteine 63, cysteine 65, cysteine 78, and cysteine 81 together coordinate Zn(2+). Mg(2+)-binding residues include aspartate 747, aspartate 749, and aspartate 751. The Zn(2+) site is built by cysteine 1078, cysteine 1269, cysteine 1276, and cysteine 1279.

Belongs to the RNA polymerase beta' chain family. In terms of assembly, the RNAP catalytic core consists of 2 alpha, 1 beta, 1 beta' and 1 omega subunit. When a sigma factor is associated with the core the holoenzyme is formed, which can initiate transcription. It depends on Mg(2+) as a cofactor. Requires Zn(2+) as cofactor.

The enzyme catalyses RNA(n) + a ribonucleoside 5'-triphosphate = RNA(n+1) + diphosphate. In terms of biological role, DNA-dependent RNA polymerase catalyzes the transcription of DNA into RNA using the four ribonucleoside triphosphates as substrates. In Thermosipho melanesiensis (strain DSM 12029 / CIP 104789 / BI429), this protein is DNA-directed RNA polymerase subunit beta'.